The chain runs to 319 residues: Protein-methionine-sulfoxide reductase catalytic subunit MsrP (319 aa).

Residues 1–40 (MHKLNENDVTPEHIFFERRKIIQSMGLMGAASLLPRFSLA) constitute a signal peptide (tat-type signal). Residues N73, 76–77 (YE), C131, T166, N218, R223, and 234–236 (NIK) each bind Mo-molybdopterin.

It belongs to the MsrP family. Heterodimer of a catalytic subunit (MsrP) and a heme-binding subunit (MsrQ). Mo-molybdopterin is required as a cofactor. In terms of processing, predicted to be exported by the Tat system. The position of the signal peptide cleavage has not been experimentally proven.

The protein localises to the periplasm. The catalysed reaction is L-methionyl-[protein] + a quinone + H2O = L-methionyl-(S)-S-oxide-[protein] + a quinol. The enzyme catalyses L-methionyl-[protein] + a quinone + H2O = L-methionyl-(R)-S-oxide-[protein] + a quinol. Functionally, part of the MsrPQ system that repairs oxidized periplasmic proteins containing methionine sulfoxide residues (Met-O), using respiratory chain electrons. Thus protects these proteins from oxidative-stress damage caused by reactive species of oxygen and chlorine generated by the host defense mechanisms. MsrPQ is essential for the maintenance of envelope integrity under bleach stress, rescuing a wide series of structurally unrelated periplasmic proteins from methionine oxidation. The catalytic subunit MsrP is non-stereospecific, being able to reduce both (R-) and (S-) diastereoisomers of methionine sulfoxide. This chain is Protein-methionine-sulfoxide reductase catalytic subunit MsrP, found in Pasteurella multocida (strain Pm70).